A 163-amino-acid chain; its full sequence is UPF0416 protein RBE_1121 (163 aa).

Belongs to the UPF0416 family.

The sequence is that of UPF0416 protein RBE_1121 from Rickettsia bellii (strain RML369-C).